The chain runs to 997 residues: Translation initiation factor IF-2 (997 aa).

Positions 36-415 (SMAGSLTTEE…ATQPLKAAKR (380 aa)) are disordered. Basic and acidic residues-rich tracts occupy residues 45–65 (EAAR…ERSG) and 94–107 (AREE…EKPA). Residues 108-126 (AVEAPAQAEPVAEAPAASP) show a composition bias toward low complexity. Positions 127-147 (HKVEEKAAPEAAKAEPAEKAK) are enriched in basic and acidic residues. Positions 151 to 162 (ARVVSAARVISR) are enriched in low complexity. A compositionally biased stretch (basic and acidic residues) spans 163 to 181 (PGEEEEKKPEPVVESKPEP). Over residues 182–196 (VAEISPVAAALAARE) the composition is skewed to low complexity. Basic and acidic residues-rich tracts occupy residues 197–214 (AAAR…EKGA) and 241–252 (PEARTEAWKDAD). The span at 300 to 309 (GRPGAPGGPR) shows a compositional bias: gly residues. A compositionally biased stretch (pro residues) spans 316–335 (PPRPGGPRPSGPGGPRPAGG). Basic and acidic residues predominate over residues 378 to 388 (GGRRDDDDSQR). A compositionally biased stretch (basic residues) spans 390-399 (NRGKGRRKGG). A tr-type G domain is found at 496–665 (PRPPVVTIMG…ALQSEIMELK (170 aa)). Positions 505 to 512 (GHVDHGKT) are G1. A GTP-binding site is contributed by 505–512 (GHVDHGKT). A G2 region spans residues 530–534 (GITQH). Residues 551–554 (DTPG) form a G3 region. Residues 551–555 (DTPGH) and 605–608 (NKMD) each bind GTP. The tract at residues 605–608 (NKMD) is G4. The tract at residues 641–643 (AAK) is G5.

Belongs to the TRAFAC class translation factor GTPase superfamily. Classic translation factor GTPase family. IF-2 subfamily.

The protein resides in the cytoplasm. In terms of biological role, one of the essential components for the initiation of protein synthesis. Protects formylmethionyl-tRNA from spontaneous hydrolysis and promotes its binding to the 30S ribosomal subunits. Also involved in the hydrolysis of GTP during the formation of the 70S ribosomal complex. This is Translation initiation factor IF-2 from Desulfovibrio desulfuricans (strain ATCC 27774 / DSM 6949 / MB).